The sequence spans 400 residues: Signal recognition particle receptor FtsY (400 aa).

Disordered regions lie at residues 12-37 (TKKTNQVEQDEPILDQQDQQDQQEEQ) and 51-86 (NKIKKTKTSETKKQEKPIETLKEKKKREKQKEKDKK). Residues 51–72 (NKIKKTKTSETKKQEKPIETLK) show a composition bias toward basic and acidic residues. Residues 192 to 199 (GVNGTGKT), 278 to 282 (DTAGR), and 342 to 345 (TKMD) contribute to the GTP site.

It belongs to the GTP-binding SRP family. FtsY subfamily. As to quaternary structure, part of the signal recognition particle protein translocation system, which is composed of SRP and FtsY.

It is found in the cell membrane. Its subcellular location is the cytoplasm. The catalysed reaction is GTP + H2O = GDP + phosphate + H(+). Involved in targeting and insertion of nascent membrane proteins into the cytoplasmic membrane. Acts as a receptor for the complex formed by the signal recognition particle (SRP) and the ribosome-nascent chain (RNC). This Mycoplasma mycoides subsp. mycoides SC (strain CCUG 32753 / NCTC 10114 / PG1) protein is Signal recognition particle receptor FtsY.